The following is a 193-amino-acid chain: UPF0397 protein PA0141 (193 aa).

Helical transmembrane passes span 11–31 (VTIA…SIPI), 43–63 (FLVF…GLLG), 69–89 (FFLF…LGFL), 109–129 (ILFF…LIAP), and 147–167 (GFLV…FLMS).

This sequence belongs to the UPF0397 family.

It localises to the cell membrane. The protein is UPF0397 protein PA0141 of Phytoplasma australiense.